The primary structure comprises 147 residues: Transthyretin (147 aa).

The N-terminal stretch at 1–20 (MASHRLLLLCLAGLVFVSEA) is a signal peptide. Cys-30 is modified (sulfocysteine). Lys-35 provides a ligand contact to L-thyroxine. A 4-carboxyglutamate modification is found at Glu-62. Residue Ser-72 is modified to Phosphoserine. Glu-74 is an L-thyroxine binding site. N-linked (GlcNAc...) asparagine glycosylation occurs at Asn-118. Ser-137 is a binding site for L-thyroxine.

Belongs to the transthyretin family. In terms of assembly, homotetramer. Dimer of dimers. In the homotetramer, subunits assemble around a central channel that can accommodate two ligand molecules. Interacts with RBP4. In terms of processing, sulfonation of the reactive cysteine Cys-30 enhances the stability of the native conformation of TTR, avoiding misassembly of the protein leading to amyloid formation. In terms of tissue distribution, detected in liver.

It localises to the secreted. Functionally, thyroid hormone-binding protein. Probably transports thyroxine from the bloodstream to the brain. This Pongo abelii (Sumatran orangutan) protein is Transthyretin (TTR).